Here is a 426-residue protein sequence, read N- to C-terminus: MLGALFLGTAANAAVQSIDRVVAIVDNDVVMQSQLDQRVHEVQQTIAKRGGGLPPPGVLDQQVLERLIVENLQLQIGERSGIRITDEELNQAVGTIAQRNNMTPEQFRIALSRDGLSYEDAREQIRREMVISRVRQRRVAERIQVSEQEVKNFLASDLGKMQLSEELHLANILIPTPESANSEAIQSAARKAMEVYQQLKQGADFGQMAVANSASDNALEGGDMGWRKAAQLPPPFDRELSSMATGDITQPARTPGGFIILKLLEKRGGESQMRDEVHVRHILVKPSPVRDEAKTKELAQSLYNRIEAGEDFAELAKKYSEDPGSALNGGDLNWIDPNALVPEFRAVMAKSPQGQLSKPFQTQYGWHVLEVLGRRATDSTEQAREQQAMTVLRNRKYDEELQTWLRQIRDEAYVEIKLPGADQAAQ.

Residues 1–13 (MLGALFLGTAANA) form the signal peptide. 2 consecutive PpiC domains span residues 164 to 265 (SEEL…KLLE) and 274 to 373 (RDEV…EVLG).

The protein resides in the periplasm. The catalysed reaction is [protein]-peptidylproline (omega=180) = [protein]-peptidylproline (omega=0). Its function is as follows. Chaperone involved in the correct folding and assembly of outer membrane proteins. Recognizes specific patterns of aromatic residues and the orientation of their side chains, which are found more frequently in integral outer membrane proteins. May act in both early periplasmic and late outer membrane-associated steps of protein maturation. The polypeptide is Chaperone SurA (Pseudomonas fluorescens (strain Pf0-1)).